The chain runs to 263 residues: Small ribosomal subunit protein eS4 (263 aa).

An S4 RNA-binding domain is found at 42–104; the sequence is LPLIIFLRNK…TGENFRLIYD (63 aa). Residue lysine 230 forms a Glycyl lysine isopeptide (Lys-Gly) (interchain with G-Cter in SUMO2) linkage. The residue at position 233 (lysine 233) is an N6-acetyllysine.

This sequence belongs to the eukaryotic ribosomal protein eS4 family. Component of the small ribosomal subunit. Part of the small subunit (SSU) processome, composed of more than 70 proteins and the RNA chaperone small nucleolar RNA (snoRNA) U3. Identified in a IGF2BP1-dependent mRNP granule complex containing untranslated mRNAs.

It localises to the cytoplasm. It is found in the nucleus. The protein localises to the nucleolus. In terms of biological role, component of the small ribosomal subunit. The ribosome is a large ribonucleoprotein complex responsible for the synthesis of proteins in the cell. Part of the small subunit (SSU) processome, first precursor of the small eukaryotic ribosomal subunit. During the assembly of the SSU processome in the nucleolus, many ribosome biogenesis factors, an RNA chaperone and ribosomal proteins associate with the nascent pre-rRNA and work in concert to generate RNA folding, modifications, rearrangements and cleavage as well as targeted degradation of pre-ribosomal RNA by the RNA exosome. The sequence is that of Small ribosomal subunit protein eS4 (RPS4X) from Oryctolagus cuniculus (Rabbit).